A 307-amino-acid chain; its full sequence is Acyl transferase (307 aa).

Catalysis depends on charge relay system residues serine 116, aspartate 213, and histidine 243.

This sequence belongs to the LuxD family.

It functions in the pathway lipid metabolism; fatty acid reduction for biolumincescence. Functionally, acyl transferase is part of the fatty acid reductase system required for aldehyde biosynthesis; it produces fatty acids for the luminescent reaction. This is Acyl transferase from Photorhabdus laumondii subsp. laumondii (strain DSM 15139 / CIP 105565 / TT01) (Photorhabdus luminescens subsp. laumondii).